We begin with the raw amino-acid sequence, 72 residues long: Conotoxin TxMMSK-04 (72 aa).

Residues 1–20 form the signal peptide; the sequence is MMSKLGVLLTICLLLFPLTA. Residues 21–51 constitute a propeptide that is removed on maturation; that stretch reads VPLDGDQPADRPAERMQDGISSEHHPFFDSV. The residue at position 55 (Gln-55) is a Pyrrolidone carboxylic acid. 3 disulfide bridges follow: Cys-57–Cys-71, Cys-58–Cys-67, and Cys-63–Cys-70. A 4-hydroxyproline modification is found at Pro-69. The residue at position 71 (Cys-71) is a Cysteine amide.

Belongs to the conotoxin M superfamily. As to expression, expressed by the venom duct.

The protein localises to the secreted. This Conus textile (Cloth-of-gold cone) protein is Conotoxin TxMMSK-04.